The following is a 367-amino-acid chain: Glutamate 5-kinase (367 aa).

Lysine 8 contacts ATP. Residues serine 49, aspartate 136, and asparagine 148 each coordinate substrate. Residues 168–169 and 210–216 each bind ATP; these read TD and TGGMVTK. Residues 275-353 enclose the PUA domain; that stretch reads AGKLYLDEGA…REISTILGYA (79 aa).

Belongs to the glutamate 5-kinase family.

The protein resides in the cytoplasm. It catalyses the reaction L-glutamate + ATP = L-glutamyl 5-phosphate + ADP. It participates in amino-acid biosynthesis; L-proline biosynthesis; L-glutamate 5-semialdehyde from L-glutamate: step 1/2. Its function is as follows. Catalyzes the transfer of a phosphate group to glutamate to form L-glutamate 5-phosphate. The chain is Glutamate 5-kinase from Nostoc punctiforme (strain ATCC 29133 / PCC 73102).